Here is a 514-residue protein sequence, read N- to C-terminus: Cytochrome P450 monooxygenase FUS8 (514 aa).

A helical membrane pass occupies residues 24 to 44 (VFENLTVTNTVCAFIALFIIV). N-linked (GlcNAc...) asparagine glycosylation is found at Asn-225 and Asn-443. Cys-460 provides a ligand contact to heme.

It belongs to the cytochrome P450 family. The cofactor is heme.

Its subcellular location is the membrane. It functions in the pathway mycotoxin biosynthesis. Cytochrome P450 monooxygenase; part of the gene cluster that mediates the biosynthesis of the mycotoxin fusarin C. Within the cluster, FUS1, FUS2, FUS8 and FUS9 are sufficient for fusarin production. The roles of the other FUS members are yet undetermined. The fusarin C synthetase FUS1 is responsible for the condensation of one acetyl-coenzyme A (CoA) unit with six malonyl-CoA units and the amide linkage of the arising heptaketide and homoserine, subsequently releasing the first intermediate, prefusarin, as an alcohol with an open ring structure. The cytochrome P450 monooxygenase FUS8 participates in multiple oxidation processes at carbon C-20 and is able to use the FUS1 product as substrate, resulting in formation of 20-hydroxy-prefusarin. This reaction seems to be essential before the 2-pyrrolidone ring closure can be catalyzed by FUS2, generating 20-hydroxy-fusarin. FUS8 is able to further oxidizes carbon C-20 after ring closure, resulting in the formation of carboxy-fusarin C. As the last step, FUS9 methylates the hydroxyl group at C-21 to generate fusarin C. Fusarin C can then rearrange to epi-fusarin C, the (z)-isomers, and fusarin A and fusarin D. In Gibberella fujikuroi (strain CBS 195.34 / IMI 58289 / NRRL A-6831) (Bakanae and foot rot disease fungus), this protein is Cytochrome P450 monooxygenase FUS8.